The sequence spans 539 residues: Protein peanut (539 aa).

Serine 6 and serine 13 each carry phosphoserine. Residues 29–90 form a disordered region; that stretch reads LRDKQQAASA…GASNGDSNKL (62 aa). A compositionally biased stretch (low complexity) spans 35–54; sequence AASASASSATNGSSGSESLV. The Septin-type G domain occupies 139–411; it reads RGFEFTLMVV…ENYRCRKLSE (273 aa). Residues 149-156 are G1 motif; that stretch reads GASGLGKS. GTP-binding positions include 149–156, threonine 183, glycine 209, 288–296, glycine 345, and arginine 360; these read GASGLGKS and KADTMTPDE. Positions 206–209 are G3 motif; it reads DTPG. A G4 motif region spans residues 287 to 290; that stretch reads AKAD. Positions 420–516 form a coiled coil; that stretch reads RLSNKNPLTQ…HVTLEELKRR (97 aa). The tract at residues 513–539 is disordered; that stretch reads LKRRSLGANSSTDNVDGKKEKKKKGLF. Serine 517 is subject to Phosphoserine.

Belongs to the TRAFAC class TrmE-Era-EngA-EngB-Septin-like GTPase superfamily. Septin GTPase family. Likely part of a multicomponent septin complex that includes Septin1. Interacts with Septin1. Interacts with hil. Interacts with park. In terms of processing, ubiquitinated by park, leading to its degradation by the proteasome. Accumulates at the leading edge of the cleavage furrow in dividing cells and cellularizing embryos (at protein level).

The protein localises to the apical cell membrane. It is found in the cleavage furrow. The protein resides in the cytoplasm. Its subcellular location is the cell cortex. Functionally, involved in cytokinesis and possibly cellularization. Also acts as an enhancer of the sina gene, thus having a role in photoreceptor development. May be involved in p53-dependent apoptosis. The chain is Protein peanut (pnut) from Drosophila melanogaster (Fruit fly).